The primary structure comprises 154 residues: MIKMLQLPFNKKGQVSFDFIIAMLFLLLIFAFMGQNVLNMAKSFRDSETAEHAHAILDSFENYAIMAYSKDVTVNATFEPIGNLNYTIMLSNKSISVNSSTNIIFQPETDANGDYVSIKCNNVDNSVNTIPLNAVRISFGDFTVSKDEMEVNIR.

Positions 1–13 (MIKMLQLPFNKKG) are excised as a propeptide. The QXSXEXXXL motif lies at 14-24 (QVSFDFIIAML).

The N-terminus is cleaved by the prepilin peptidase EppA, which recognizes the class III signal sequence.

The protein resides in the secreted. It localises to the cell surface. The protein localises to the fimbrium. Minor component of the type IV-like pili. Essential for pili formation. This chain is Minor structural pilin EpdC, found in Methanococcus maripaludis (strain DSM 14266 / JCM 13030 / NBRC 101832 / S2 / LL).